Here is a 257-residue protein sequence, read N- to C-terminus: Thioredoxin-dependent peroxide reductase, mitochondrial (257 aa).

A mitochondrion-targeting transit peptide spans 1 to 62 (MAAAAGRLLW…FAFSTSSSFH (62 aa)). In terms of domain architecture, Thioredoxin spans 64 to 222 (PAVTQHAPHF…PLRLVKAFQF (159 aa)). Lysine 84 bears the N6-succinyllysine mark. Lysine 92 carries the post-translational modification N6-acetyllysine; alternate. An N6-succinyllysine; alternate modification is found at lysine 92. Cysteine 109 serves as the catalytic Cysteine sulfenic acid (-SOH) intermediate. Threonine 147 is subject to Phosphothreonine.

This sequence belongs to the peroxiredoxin family. AhpC/Prx1 subfamily. As to quaternary structure, homodimer; disulfide-linked, upon oxidation. 6 homodimers assemble to form a ring-like dodecamer. Interacts with NEK6. Interacts with LRRK2. Interacts with MAP3K13. Interacts with RPS6KC1 (via PX domain). In terms of processing, phosphorylated by LRRK2; phosphorylation reduces perodixase activity. The enzyme can be inactivated by further oxidation of the cysteine sulfenic acid (C(P)-SOH) to sulphinic acid (C(P)-SO2H) and sulphonic acid (C(P)-SO3H) instead of its condensation to a disulfide bond. Post-translationally, S-palmitoylated. As to expression, ubiquitous.

It localises to the mitochondrion. The protein resides in the cytoplasm. It is found in the early endosome. The catalysed reaction is a hydroperoxide + [thioredoxin]-dithiol = an alcohol + [thioredoxin]-disulfide + H2O. In terms of biological role, thiol-specific peroxidase that catalyzes the reduction of hydrogen peroxide and organic hydroperoxides to water and alcohols, respectively. Plays a role in cell protection against oxidative stress by detoxifying peroxides. Acts synergistically with MAP3K13 to regulate the activation of NF-kappa-B in the cytosol. Required for the maintenance of physical strength. The protein is Thioredoxin-dependent peroxide reductase, mitochondrial (Prdx3) of Rattus norvegicus (Rat).